Here is a 277-residue protein sequence, read N- to C-terminus: Transcription factor WRKY19 (277 aa).

Positions 100-168 form a DNA-binding region, WRKY; that stretch reads QDTASLDDGL…YLGDHTCGQA (69 aa).

Belongs to the WRKY group III family.

It is found in the nucleus. Functionally, may play a role in defense responses. This Oryza sativa subsp. japonica (Rice) protein is Transcription factor WRKY19.